The chain runs to 308 residues: Elongation factor Ts (308 aa).

Positions 79–82 (TDFV) are involved in Mg(2+) ion dislocation from EF-Tu.

The protein belongs to the EF-Ts family.

The protein resides in the cytoplasm. Its function is as follows. Associates with the EF-Tu.GDP complex and induces the exchange of GDP to GTP. It remains bound to the aminoacyl-tRNA.EF-Tu.GTP complex up to the GTP hydrolysis stage on the ribosome. This Bdellovibrio bacteriovorus (strain ATCC 15356 / DSM 50701 / NCIMB 9529 / HD100) protein is Elongation factor Ts.